The sequence spans 1709 residues: Hybrid signal transduction histidine kinase L (1709 aa).

Disordered stretches follow at residues S52–H192, F206–D276, T413–C535, and Q554–N615. The segment covering N53–N87 has biased composition (low complexity). Residues N88–L100 are compositionally biased toward basic and acidic residues. Residues T106 to N148 show a composition bias toward low complexity. The segment covering S149–N170 has biased composition (polar residues). Low complexity-rich tracts occupy residues T413–S466, N486–C535, and Q554–S576. Residues L585–Q610 are compositionally biased toward polar residues. Residues A700 to N771 form the PAS domain. A PAC domain is found at W770–L822. Residues M837–K1059 form the Histidine kinase domain. H840 is modified (phosphohistidine; by autocatalysis). 2 disordered regions span residues L1068 to H1112 and Q1137 to P1298. Low complexity-rich tracts occupy residues L1075 to H1112, Q1137 to Q1153, and N1176 to Q1194. Residues H1204 to Q1221 are compositionally biased toward basic residues. 2 stretches are compositionally biased toward polar residues: residues N1244 to S1257 and N1275 to P1298. Response regulatory domains lie at K1312–L1492 and K1570–G1692. 4-aspartylphosphate is present on D1366. Composition is skewed to low complexity over residues Q1390–Q1412 and K1420–G1440. The disordered stretch occupies residues Q1390–G1440. Residue D1622 is modified to 4-aspartylphosphate.

Activation probably requires transfer of a phosphate group between a histidine in the kinase core (transmitter) domain and an aspartate of the receiver domain.

The catalysed reaction is ATP + protein L-histidine = ADP + protein N-phospho-L-histidine.. Functionally, acts as a receptor histidine kinase for a signal transduction pathway. This protein undergoes an ATP-dependent autophosphorylation at a conserved histidine residue in the kinase core, and a phosphoryl group is then transferred to a conserved aspartate residue in the receiver domain. The polypeptide is Hybrid signal transduction histidine kinase L (dhkL) (Dictyostelium discoideum (Social amoeba)).